We begin with the raw amino-acid sequence, 1101 residues long: Selenocysteine insertion sequence-binding protein 2-like (1101 aa).

Disordered regions lie at residues 154-206, 240-295, 320-387, 884-1010, and 1030-1101; these read LGQV…AGPD, LWKS…PDSG, QKKP…SESL, TSDG…ISVE, and TLQL…TQTT. Residues 255–265 are compositionally biased toward low complexity; it reads AESSSEQGASE. Residue Ser276 is modified to Phosphoserine. The span at 327–346 shows a compositional bias: polar residues; that stretch reads KNQTFSRGGRQTEQRNNSQV. Basic and acidic residues-rich tracts occupy residues 356–371 and 892–908; these read SSER…DNKH and ENEK…EKPS. The span at 925-939 shows a compositional bias: low complexity; sequence ATGSTTSATSAGKST. A compositionally biased stretch (basic and acidic residues) spans 940-950; sequence ASDKEEVKPDD. The span at 954–964 shows a compositional bias: polar residues; that stretch reads ASQQSTETGSL. Over residues 988–1002 the composition is skewed to acidic residues; it reads LEEEEDEDEEEEEDY. Residues 1030-1039 are compositionally biased toward polar residues; it reads TLQLGKTLNG. Over residues 1040 to 1057 the composition is skewed to acidic residues; sequence SEEDNVEQSGEEEAEAPE. Over residues 1070-1087 the composition is skewed to polar residues; the sequence is ADQQASPGQQKSSNCSSL.

Its function is as follows. Binds SECIS (Sec insertion sequence) elements present on selenocysteine (Sec) protein mRNAs, but does not promote Sec incorporation into selenoproteins in vitro. The chain is Selenocysteine insertion sequence-binding protein 2-like (SECISBP2L) from Homo sapiens (Human).